Reading from the N-terminus, the 426-residue chain is Histidine--tRNA ligase (426 aa).

Belongs to the class-II aminoacyl-tRNA synthetase family. In terms of assembly, homodimer.

Its subcellular location is the cytoplasm. It carries out the reaction tRNA(His) + L-histidine + ATP = L-histidyl-tRNA(His) + AMP + diphosphate + H(+). This is Histidine--tRNA ligase from Pseudoalteromonas translucida (strain TAC 125).